The sequence spans 180 residues: Transcription factor HES-7.1-B (180 aa).

In terms of domain architecture, bHLH spans 13–70 (HRKLLKPLVEKRRRERINNSLEKLRIFLSQTLKSEKLKNPKVEKAEILECTVQFLQSR). The region spanning 84-116 (YQSGFQHCLETTLHFMNSKPDMNGVTKELLSHQ) is the Orange domain. Positions 176-179 (WRPW) match the WRPW motif motif.

In terms of assembly, transcription repression requires formation of a complex with a corepressor protein of the Groucho/TLE family. Expressed in the presumptive midbrain-hindbrain boundary (MHB) as early as the early gastrula stage (stage 10.5). Expression in the MHB continues through to tailbud stage. Also transiently expressed in the eye anlage at late neurula stage.

Its subcellular location is the nucleus. Transcriptional repressor. Represses transcription from both N box- and E box-containing promoters. Demarcates the prospective midbrain-hindbrain boundary (MHB) region in the neuroectoderm in early gastrulae embryos by repressing transcription of a number of target genes. In Xenopus laevis (African clawed frog), this protein is Transcription factor HES-7.1-B (hes7.1-b).